The primary structure comprises 644 residues: Leucine-rich repeat protein soc-2 homolog (644 aa).

Positions 1–19 (MNLCSSGATASTTSLSSTG) are enriched in low complexity. Disordered stretches follow at residues 1–60 (MNLC…APTL) and 82–150 (NSPA…IQAD). Gly residues-rich tracts occupy residues 26–50 (GVPG…GGKA) and 87–96 (GAGGASGFTG). Residues 99–117 (QQPTGSNGHSHLHNENNAN) show a composition bias toward polar residues. LRR repeat units follow at residues 164-185 (GIKR…VKEC), 187-208 (HLTE…IGCL), 210-231 (SLRN…LQNC), 233-254 (QLKV…IYRL), 256-277 (SLTT…LRQL), 279-300 (NLTM…IGAL), 302-323 (NLTT…IGNC), 325-346 (NLSA…IGNL), 348-370 (SLVR…KNCK), 371-392 (SMDE…MLAS), 395-416 (GLTT…GPAQ), 419-440 (NVYS…IFSR), 443-464 (GLTK…IGTW), 466-487 (NMVE…IMNL), 489-510 (NLEI…IGNL), 512-533 (RLRI…IGLL), 535-556 (ELQR…IGHL), 558-579 (NLTH…IGSL), 581-603 (SLEN…LALC), and 605-626 (NLKY…IQAG).

The protein belongs to the SHOC2 family.

Its function is as follows. Acts as a Ras effector and participates in MAPK pathway activation. Probably acts as a regulatory subunit of protein phosphatase that specifically dephosphorylates Raf kinase and stimulate Raf activity at specialized signaling complexes upon Ras activation. This chain is Leucine-rich repeat protein soc-2 homolog (Sur-8), found in Drosophila erecta (Fruit fly).